The following is a 701-amino-acid chain: Interleukin-1 receptor accessory protein-like 1-A (701 aa).

The signal sequence occupies residues 1-19 (MTALNPVLFLLCGVSVSLS). The Extracellular segment spans residues 20–361 (LKVVSKRGSV…IGKRVELMYT (342 aa)). Residues 33-133 (TDWSVDYLKY…RNSTFCMKVS (101 aa)) form the Ig-like C2-type 1 domain. A disulfide bridge connects residues Cys54 and Cys121. N-linked (GlcNAc...) asparagine glycans are attached at residues Asn64, Asn125, Asn141, Asn216, Asn267, and Asn334. Ig-like C2-type domains lie at 146-235 (CYNS…TYLS) and 245-353 (PRIL…VQIG). Cys167 and Cys219 form a disulfide bridge. A disulfide bond links Cys270 and Cys337. The chain crosses the membrane as a helical span at residues 362–382 (VELAGGLGAILLLLALLLSVY). Topologically, residues 383 to 701 (KCYRIELLLC…RETSISSVIW (319 aa)) are cytoplasmic. A TIR domain is found at 407–563 (KEYDAYLSYS…RFWKQLRYTM (157 aa)). The active site involves Glu495. Positions 568–701 (PQQTITNHAL…RETSISSVIW (134 aa)) are required for synaptic vesicle accumulation during synaptogenesis.

The protein belongs to the interleukin-1 receptor family.

The protein resides in the cell membrane. The protein localises to the cytoplasm. It carries out the reaction NAD(+) + H2O = ADP-D-ribose + nicotinamide + H(+). Its function is as follows. May regulate secretion and presynaptic differentiation through inhibition of the activity of N-type voltage-gated calcium channel. During presynaptic differentiation may regulate both synaptic vesicle accumulation in axon terminals and subsequent axon terminal remodeling. The chain is Interleukin-1 receptor accessory protein-like 1-A (il1rapl1a) from Danio rerio (Zebrafish).